The sequence spans 624 residues: Dihydroxy-acid dehydratase (624 aa).

Asp81 provides a ligand contact to Mg(2+). Cys122 is a [2Fe-2S] cluster binding site. Residues Asp123 and Lys124 each coordinate Mg(2+). Lys124 is subject to N6-carboxylysine. Cys195 serves as a coordination point for [2Fe-2S] cluster. Glu499 is a Mg(2+) binding site. Residue Ser525 is the Proton acceptor of the active site.

The protein belongs to the IlvD/Edd family. Homodimer. [2Fe-2S] cluster serves as cofactor. It depends on Mg(2+) as a cofactor.

It catalyses the reaction (2R)-2,3-dihydroxy-3-methylbutanoate = 3-methyl-2-oxobutanoate + H2O. It carries out the reaction (2R,3R)-2,3-dihydroxy-3-methylpentanoate = (S)-3-methyl-2-oxopentanoate + H2O. It functions in the pathway amino-acid biosynthesis; L-isoleucine biosynthesis; L-isoleucine from 2-oxobutanoate: step 3/4. It participates in amino-acid biosynthesis; L-valine biosynthesis; L-valine from pyruvate: step 3/4. Functionally, functions in the biosynthesis of branched-chain amino acids. Catalyzes the dehydration of (2R,3R)-2,3-dihydroxy-3-methylpentanoate (2,3-dihydroxy-3-methylvalerate) into 2-oxo-3-methylpentanoate (2-oxo-3-methylvalerate) and of (2R)-2,3-dihydroxy-3-methylbutanoate (2,3-dihydroxyisovalerate) into 2-oxo-3-methylbutanoate (2-oxoisovalerate), the penultimate precursor to L-isoleucine and L-valine, respectively. The protein is Dihydroxy-acid dehydratase of Shewanella baltica (strain OS185).